Consider the following 223-residue polypeptide: DNA mismatch repair protein MutH (223 aa).

Belongs to the MutH family.

The protein resides in the cytoplasm. Its function is as follows. Sequence-specific endonuclease that cleaves unmethylated GATC sequences. It is involved in DNA mismatch repair. The chain is DNA mismatch repair protein MutH from Shewanella sp. (strain MR-7).